A 924-amino-acid polypeptide reads, in one-letter code: Protein translocase subunit SecA (924 aa).

ATP is bound by residues Gln-87, 105–109 (GEGKT), and Asp-517. Positions 886–906 (VPAADRDPNDPSTWGKVGRNE) are disordered. Positions 908, 910, 919, and 920 each coordinate Zn(2+).

This sequence belongs to the SecA family. Monomer and homodimer. Part of the essential Sec protein translocation apparatus which comprises SecA, SecYEG and auxiliary proteins SecDF-YajC and YidC. Zn(2+) is required as a cofactor.

Its subcellular location is the cell inner membrane. The protein localises to the cytoplasm. It carries out the reaction ATP + H2O + cellular proteinSide 1 = ADP + phosphate + cellular proteinSide 2.. Part of the Sec protein translocase complex. Interacts with the SecYEG preprotein conducting channel. Has a central role in coupling the hydrolysis of ATP to the transfer of proteins into and across the cell membrane, serving both as a receptor for the preprotein-SecB complex and as an ATP-driven molecular motor driving the stepwise translocation of polypeptide chains across the membrane. The polypeptide is Protein translocase subunit SecA (Azorhizobium caulinodans (strain ATCC 43989 / DSM 5975 / JCM 20966 / LMG 6465 / NBRC 14845 / NCIMB 13405 / ORS 571)).